A 280-amino-acid chain; its full sequence is 3-deoxy-manno-octulosonate cytidylyltransferase (280 aa).

The protein belongs to the KdsB family.

It is found in the cytoplasm. It carries out the reaction 3-deoxy-alpha-D-manno-oct-2-ulosonate + CTP = CMP-3-deoxy-beta-D-manno-octulosonate + diphosphate. It participates in nucleotide-sugar biosynthesis; CMP-3-deoxy-D-manno-octulosonate biosynthesis; CMP-3-deoxy-D-manno-octulosonate from 3-deoxy-D-manno-octulosonate and CTP: step 1/1. The protein operates within bacterial outer membrane biogenesis; lipopolysaccharide biosynthesis. Activates KDO (a required 8-carbon sugar) for incorporation into bacterial lipopolysaccharide in Gram-negative bacteria. This Colwellia psychrerythraea (strain 34H / ATCC BAA-681) (Vibrio psychroerythus) protein is 3-deoxy-manno-octulosonate cytidylyltransferase.